We begin with the raw amino-acid sequence, 343 residues long: Olfactory receptor 6K6 (343 aa).

The Extracellular segment spans residues 1-53 (MKQYSVGNQHSNYRSLLFPFLCSQMTQLTASGNQTMVTEFLFSMFPHAHRGGL). Residue Asn-33 is glycosylated (N-linked (GlcNAc...) asparagine). The helical transmembrane segment at 54–74 (LFFIPLLLIYGFILTGNLIMF) threads the bilayer. Over 75–82 (IVIQVGMA) the chain is Cytoplasmic. The chain crosses the membrane as a helical span at residues 83 to 103 (LHTPLYFFISVLSFLEICYTT). Topologically, residues 104–127 (TTIPKMLSCLISEQKSISVAGCLL) are extracellular. Cys-125 and Cys-217 are disulfide-bonded. Residues 128 to 148 (QMYFFHSLGITESCVLTAMAI) form a helical membrane-spanning segment. At 149 to 167 (DRYIAICNPLRYPTIMIPK) the chain is on the cytoplasmic side. A helical membrane pass occupies residues 168–188 (LCIQLTVGSCFCGFLLVLPEI). At 189-224 (AWISTLPFCGSNQIHQIFCDFTPVLSLACTDTFLVV) the chain is on the extracellular side. The helical transmembrane segment at 225-244 (IVDAIHAAEIVASFLVIALS) threads the bilayer. Over 245-264 (YIRIIIVILGMHSAEGHHKA) the chain is Cytoplasmic. A helical membrane pass occupies residues 265 to 285 (FSTCAAHLAVFLLFFGSVAVM). Residues 286 to 298 (YLRFSATYSVFWD) are Extracellular-facing. Residues 299–319 (TAIAVTFVILAPFFNPIIYSL) form a helical membrane-spanning segment. Residues 320-343 (KNKDMKEAIGRLFHYQKRAGWAGK) are Cytoplasmic-facing.

The protein belongs to the G-protein coupled receptor 1 family.

The protein resides in the cell membrane. In terms of biological role, odorant receptor. The protein is Olfactory receptor 6K6 (OR6K6) of Homo sapiens (Human).